A 262-amino-acid polypeptide reads, in one-letter code: MNPVAFSIGSFEVRWYGIIIALGILIAMTLVSINAKKKNLNFDVILDLFLWCFPFAIIGARAYYVLFELENYHSFWDMINIRQGGLAIHGGIIGAFLTAFIYCKVKKVDFLAYADIVAPAFILAQGIGRWGNFFNQEAHGGQVTSEFISKFPEFIQRGMYINGAYYHPTFLYESIWDIFVAILLMIILYNITDRYKGVVISAYISLYSLGRFFIEGLRTDSLYFMNIRVAQLVSLLGIIIGIVAIIIIVSRGKKKRKGIFIN.

4 consecutive transmembrane segments (helical) span residues 15–35 (WYGIIIALGILIAMTLVSINA), 40–60 (LNFDVILDLFLWCFPFAIIGA), 83–103 (QGGLAIHGGIIGAFLTAFIYC), and 108–128 (VDFLAYADIVAPAFILAQGIG). R129 serves as a coordination point for a 1,2-diacyl-sn-glycero-3-phospho-(1'-sn-glycerol). The next 3 helical transmembrane spans lie at 169-189 (TFLYESIWDIFVAILLMIILY), 197-217 (GVVISAYISLYSLGRFFIEGL), and 229-249 (VAQLVSLLGIIIGIVAIIIIV).

The protein belongs to the Lgt family.

It localises to the cell membrane. The catalysed reaction is L-cysteinyl-[prolipoprotein] + a 1,2-diacyl-sn-glycero-3-phospho-(1'-sn-glycerol) = an S-1,2-diacyl-sn-glyceryl-L-cysteinyl-[prolipoprotein] + sn-glycerol 1-phosphate + H(+). It functions in the pathway protein modification; lipoprotein biosynthesis (diacylglyceryl transfer). Catalyzes the transfer of the diacylglyceryl group from phosphatidylglycerol to the sulfhydryl group of the N-terminal cysteine of a prolipoprotein, the first step in the formation of mature lipoproteins. This is Phosphatidylglycerol--prolipoprotein diacylglyceryl transferase 1 from Clostridium perfringens (strain 13 / Type A).